A 413-amino-acid chain; its full sequence is Glutaminase (413 aa).

The glutaminase stretch occupies residues 23–307 (GELADYIPEL…LSDDMGLHLM (285 aa)). Substrate contacts are provided by Ser-65, Asn-114, Glu-160, Asn-167, Tyr-191, Tyr-243, and Val-261. In terms of domain architecture, STAS spans 316-413 (AVRSITRDGD…SDGTICKERV (98 aa)).

Belongs to the glutaminase family. Homotetramer.

The catalysed reaction is L-glutamine + H2O = L-glutamate + NH4(+). This Corynebacterium glutamicum (strain ATCC 13032 / DSM 20300 / JCM 1318 / BCRC 11384 / CCUG 27702 / LMG 3730 / NBRC 12168 / NCIMB 10025 / NRRL B-2784 / 534) protein is Glutaminase (glsA).